Here is a 165-residue protein sequence, read N- to C-terminus: SsrA-binding protein (165 aa).

A disordered region spans residues 141–165 (KLHDKRQDEKRKQADREVKSALARY). Residues 145–159 (KRQDEKRKQADREVK) show a composition bias toward basic and acidic residues.

This sequence belongs to the SmpB family.

It is found in the cytoplasm. In terms of biological role, required for rescue of stalled ribosomes mediated by trans-translation. Binds to transfer-messenger RNA (tmRNA), required for stable association of tmRNA with ribosomes. tmRNA and SmpB together mimic tRNA shape, replacing the anticodon stem-loop with SmpB. tmRNA is encoded by the ssrA gene; the 2 termini fold to resemble tRNA(Ala) and it encodes a 'tag peptide', a short internal open reading frame. During trans-translation Ala-aminoacylated tmRNA acts like a tRNA, entering the A-site of stalled ribosomes, displacing the stalled mRNA. The ribosome then switches to translate the ORF on the tmRNA; the nascent peptide is terminated with the 'tag peptide' encoded by the tmRNA and targeted for degradation. The ribosome is freed to recommence translation, which seems to be the essential function of trans-translation. This Prochlorococcus marinus (strain MIT 9313) protein is SsrA-binding protein.